A 199-amino-acid polypeptide reads, in one-letter code: DnaJ homolog subfamily C member 5B (199 aa).

Phosphoserine is present on residues S14 and S16. In terms of domain architecture, J spans A19–G84.

Interacts with the chaperone complex consisting of HSC70 and SGTA. In terms of processing, palmitoylated.

Its subcellular location is the membrane. This Bos taurus (Bovine) protein is DnaJ homolog subfamily C member 5B (DNAJC5B).